Here is a 121-residue protein sequence, read N- to C-terminus: uncharacterized protein (121 aa).

The disordered stretch occupies residues 85–111 (NANNDDYESPYKTPKIKSNPSLDSSGS). The segment covering 100–111 (IKSNPSLDSSGS) has biased composition (polar residues).

This is an uncharacterized protein from Dictyostelium discoideum (Social amoeba).